Reading from the N-terminus, the 359-residue chain is Membrane-bound lytic murein transglycosylase C (359 aa).

The signal sequence occupies residues 1 to 16; the sequence is MKKYLALALIAPLLIS. C17 carries N-palmitoyl cysteine lipidation. C17 carries the S-diacylglycerol cysteine lipid modification.

The protein belongs to the transglycosylase Slt family.

The protein resides in the cell outer membrane. It catalyses the reaction Exolytic cleavage of the (1-&gt;4)-beta-glycosidic linkage between N-acetylmuramic acid (MurNAc) and N-acetylglucosamine (GlcNAc) residues in peptidoglycan, from either the reducing or the non-reducing ends of the peptidoglycan chains, with concomitant formation of a 1,6-anhydrobond in the MurNAc residue.. Functionally, murein-degrading enzyme. May play a role in recycling of muropeptides during cell elongation and/or cell division. This Escherichia coli O139:H28 (strain E24377A / ETEC) protein is Membrane-bound lytic murein transglycosylase C.